The following is a 319-amino-acid chain: uncharacterized protein (319 aa).

A signal peptide spans methionine 1–alanine 23.

To H.influenzae HI_0755.

This is an uncharacterized protein from Escherichia coli (strain K12).